The chain runs to 191 residues: Leucyl/phenylalanyl-tRNA--protein transferase (191 aa).

It belongs to the L/F-transferase family.

The protein resides in the cytoplasm. It carries out the reaction N-terminal L-lysyl-[protein] + L-leucyl-tRNA(Leu) = N-terminal L-leucyl-L-lysyl-[protein] + tRNA(Leu) + H(+). The enzyme catalyses N-terminal L-arginyl-[protein] + L-leucyl-tRNA(Leu) = N-terminal L-leucyl-L-arginyl-[protein] + tRNA(Leu) + H(+). The catalysed reaction is L-phenylalanyl-tRNA(Phe) + an N-terminal L-alpha-aminoacyl-[protein] = an N-terminal L-phenylalanyl-L-alpha-aminoacyl-[protein] + tRNA(Phe). Functions in the N-end rule pathway of protein degradation where it conjugates Leu, Phe and, less efficiently, Met from aminoacyl-tRNAs to the N-termini of proteins containing an N-terminal arginine or lysine. This is Leucyl/phenylalanyl-tRNA--protein transferase from Nostoc punctiforme (strain ATCC 29133 / PCC 73102).